Here is a 281-residue protein sequence, read N- to C-terminus: Probable protein phosphatase 2C 9 (281 aa).

Residues 33 to 280 enclose the PPM-type phosphatase domain; it reads KYGFSLVKGK…DDISCVVVRF (248 aa). Positions 70, 71, 232, and 271 each coordinate Mn(2+).

It belongs to the PP2C family. As to quaternary structure, interacts with phytochromes (via N-terminus). The cofactor is Mg(2+). Mn(2+) is required as a cofactor.

The protein localises to the nucleus. It carries out the reaction O-phospho-L-seryl-[protein] + H2O = L-seryl-[protein] + phosphate. It catalyses the reaction O-phospho-L-threonyl-[protein] + H2O = L-threonyl-[protein] + phosphate. Involved in the regulation of phytochrome signaling. May regulate phytochrome-interacting factor 3 (PIF3) through the dephosphorylation of phytochrome. This Arabidopsis thaliana (Mouse-ear cress) protein is Probable protein phosphatase 2C 9.